A 62-amino-acid polypeptide reads, in one-letter code: MLFKSLQSISSIKSVSQKSQLKNTISSSQFGSNSNQLLDVAACIDLNLAPLLSVHVDADISL.

This is an uncharacterized protein from Dictyostelium discoideum (Social amoeba).